We begin with the raw amino-acid sequence, 79 residues long: Sec-independent protein translocase protein TatA (79 aa).

Residues 1 to 21 form a helical membrane-spanning segment; that stretch reads MFSGISIWQLLILLAIVVLLF. Basic and acidic residues-rich tracts occupy residues 44–58 and 66–79; these read MKDG…RLAD and QDAE…KDKA. A disordered region spans residues 44–79; the sequence is MKDGEDEQDHKRLADDDQPQNKQDAEQKAEQEKDKA.

The protein belongs to the TatA/E family. In terms of assembly, the Tat system comprises two distinct complexes: a TatABC complex, containing multiple copies of TatA, TatB and TatC subunits, and a separate TatA complex, containing only TatA subunits. Substrates initially bind to the TatABC complex, which probably triggers association of the separate TatA complex to form the active translocon.

It localises to the cell inner membrane. Its function is as follows. Part of the twin-arginine translocation (Tat) system that transports large folded proteins containing a characteristic twin-arginine motif in their signal peptide across membranes. TatA could form the protein-conducting channel of the Tat system. This Alcanivorax borkumensis (strain ATCC 700651 / DSM 11573 / NCIMB 13689 / SK2) protein is Sec-independent protein translocase protein TatA.